Here is a 137-residue protein sequence, read N- to C-terminus: Large ribosomal subunit protein uL16 (137 aa).

The protein belongs to the universal ribosomal protein uL16 family. In terms of assembly, part of the 50S ribosomal subunit.

Functionally, binds 23S rRNA and is also seen to make contacts with the A and possibly P site tRNAs. The sequence is that of Large ribosomal subunit protein uL16 from Halorhodospira halophila (strain DSM 244 / SL1) (Ectothiorhodospira halophila (strain DSM 244 / SL1)).